A 245-amino-acid polypeptide reads, in one-letter code: 1-(5-phosphoribosyl)-5-[(5-phosphoribosylamino)methylideneamino] imidazole-4-carboxamide isomerase (245 aa).

Aspartate 7 acts as the Proton acceptor in catalysis. Aspartate 129 serves as the catalytic Proton donor.

Belongs to the HisA/HisF family.

The protein resides in the cytoplasm. The catalysed reaction is 1-(5-phospho-beta-D-ribosyl)-5-[(5-phospho-beta-D-ribosylamino)methylideneamino]imidazole-4-carboxamide = 5-[(5-phospho-1-deoxy-D-ribulos-1-ylimino)methylamino]-1-(5-phospho-beta-D-ribosyl)imidazole-4-carboxamide. The protein operates within amino-acid biosynthesis; L-histidine biosynthesis; L-histidine from 5-phospho-alpha-D-ribose 1-diphosphate: step 4/9. The chain is 1-(5-phosphoribosyl)-5-[(5-phosphoribosylamino)methylideneamino] imidazole-4-carboxamide isomerase from Citrobacter koseri (strain ATCC BAA-895 / CDC 4225-83 / SGSC4696).